A 568-amino-acid chain; its full sequence is Adenine deaminase (568 aa).

The protein belongs to the metallo-dependent hydrolases superfamily. Adenine deaminase family. The cofactor is Mn(2+).

It catalyses the reaction adenine + H2O + H(+) = hypoxanthine + NH4(+). The protein is Adenine deaminase of Clostridium perfringens (strain ATCC 13124 / DSM 756 / JCM 1290 / NCIMB 6125 / NCTC 8237 / Type A).